A 432-amino-acid polypeptide reads, in one-letter code: UDP-N-acetylmuramate--L-alanine ligase (432 aa).

109–115 (GAHGKST) contacts ATP.

It belongs to the MurCDEF family.

Its subcellular location is the cytoplasm. It carries out the reaction UDP-N-acetyl-alpha-D-muramate + L-alanine + ATP = UDP-N-acetyl-alpha-D-muramoyl-L-alanine + ADP + phosphate + H(+). It participates in cell wall biogenesis; peptidoglycan biosynthesis. Cell wall formation. In Campylobacter jejuni subsp. jejuni serotype O:2 (strain ATCC 700819 / NCTC 11168), this protein is UDP-N-acetylmuramate--L-alanine ligase.